Here is a 147-residue protein sequence, read N- to C-terminus: UPF0306 protein YhbP (147 aa).

This sequence belongs to the UPF0306 family.

The sequence is that of UPF0306 protein YhbP from Shigella boydii serotype 4 (strain Sb227).